Here is a 423-residue protein sequence, read N- to C-terminus: Enolase (423 aa).

A (2R)-2-phosphoglycerate-binding site is contributed by Gln-166. Glu-208 acts as the Proton donor in catalysis. Mg(2+)-binding residues include Asp-242, Glu-283, and Asp-310. Lys-335, Arg-364, Ser-365, and Lys-386 together coordinate (2R)-2-phosphoglycerate. Catalysis depends on Lys-335, which acts as the Proton acceptor.

This sequence belongs to the enolase family. Mg(2+) is required as a cofactor.

The protein resides in the cytoplasm. Its subcellular location is the secreted. It localises to the cell surface. It carries out the reaction (2R)-2-phosphoglycerate = phosphoenolpyruvate + H2O. It functions in the pathway carbohydrate degradation; glycolysis; pyruvate from D-glyceraldehyde 3-phosphate: step 4/5. Functionally, catalyzes the reversible conversion of 2-phosphoglycerate (2-PG) into phosphoenolpyruvate (PEP). It is essential for the degradation of carbohydrates via glycolysis. This is Enolase from Elusimicrobium minutum (strain Pei191).